Here is a 534-residue protein sequence, read N- to C-terminus: Prolyl 4-hydroxylase subunit alpha-1 (534 aa).

Positions 1–17 (MIWGVLMMGILLPQCSA) are cleaved as a signal peptide. Asparagine 113 carries N-linked (GlcNAc...) asparagine glycosylation. One copy of the TPR repeat lies at 205–238 (VSVLDYLSYAVYQQGDLDKALLLTKKLLELDPEH). Residue asparagine 259 is glycosylated (N-linked (GlcNAc...) asparagine). Residues 411–519 (TAEELQVANY…KWVSNKWLHE (109 aa)) form the Fe2OG dioxygenase domain. Fe cation is bound by residues histidine 429, aspartate 431, and histidine 500. Lysine 510 contacts 2-oxoglutarate.

Belongs to the P4HA family. As to quaternary structure, heterotetramer of two alpha-1 chains and two beta chains (P4HB)(the beta chain is the multi-functional PDI), where P4HB plays the role of a structural subunit; this tetramer catalyzes the formation of 4-hydroxyproline in collagen. Requires Fe(2+) as cofactor. It depends on L-ascorbate as a cofactor.

The protein localises to the endoplasmic reticulum lumen. The catalysed reaction is L-prolyl-[collagen] + 2-oxoglutarate + O2 = trans-4-hydroxy-L-prolyl-[collagen] + succinate + CO2. Functionally, catalyzes the post-translational formation of 4-hydroxyproline in -Xaa-Pro-Gly- sequences in collagens and other proteins. The chain is Prolyl 4-hydroxylase subunit alpha-1 (P4ha1) from Rattus norvegicus (Rat).